We begin with the raw amino-acid sequence, 283 residues long: 3-methyl-2-oxobutanoate hydroxymethyltransferase (283 aa).

Mg(2+)-binding residues include D46 and D85. Residues 46–47 (DS), D85, and K115 contribute to the 3-methyl-2-oxobutanoate site. A Mg(2+)-binding site is contributed by E117. E184 acts as the Proton acceptor in catalysis.

The protein belongs to the PanB family. In terms of assembly, homodecamer; pentamer of dimers. Requires Mg(2+) as cofactor.

The protein localises to the cytoplasm. The catalysed reaction is 3-methyl-2-oxobutanoate + (6R)-5,10-methylene-5,6,7,8-tetrahydrofolate + H2O = 2-dehydropantoate + (6S)-5,6,7,8-tetrahydrofolate. It functions in the pathway cofactor biosynthesis; (R)-pantothenate biosynthesis; (R)-pantoate from 3-methyl-2-oxobutanoate: step 1/2. In terms of biological role, catalyzes the reversible reaction in which hydroxymethyl group from 5,10-methylenetetrahydrofolate is transferred onto alpha-ketoisovalerate to form ketopantoate. In Acetivibrio thermocellus (strain ATCC 27405 / DSM 1237 / JCM 9322 / NBRC 103400 / NCIMB 10682 / NRRL B-4536 / VPI 7372) (Clostridium thermocellum), this protein is 3-methyl-2-oxobutanoate hydroxymethyltransferase.